Here is a 248-residue protein sequence, read N- to C-terminus: Granzyme E (248 aa).

The signal sequence occupies residues 1–18 (MPPVLILLTLLLPLGAGA). A propeptide spanning residues 19-20 (EE) is cleaved from the precursor. A Peptidase S1 domain is found at 21–246 (IIGGHVVKPH…FLPWISRNMK (226 aa)). The cysteines at positions 50 and 66 are disulfide-linked. His-65 functions as the Charge relay system in the catalytic mechanism. N-linked (GlcNAc...) asparagine glycans are attached at residues Asn-68 and Asn-102. Catalysis depends on Asp-109, which acts as the Charge relay system. 2 disulfides stabilise this stretch: Cys-143/Cys-210 and Cys-175/Cys-189. Asn-154 carries N-linked (GlcNAc...) asparagine glycosylation. The Charge relay system role is filled by Ser-204. Asn-223 carries N-linked (GlcNAc...) asparagine glycosylation.

This sequence belongs to the peptidase S1 family. Granzyme subfamily.

It is found in the cytolytic granule. In terms of biological role, this enzyme is probably necessary for target cell lysis in cell-mediated immune responses. The polypeptide is Granzyme E (Gzme) (Mus musculus (Mouse)).